Here is a 195-residue protein sequence, read N- to C-terminus: Peptidyl-tRNA hydrolase (195 aa).

Position 17 (Y17) interacts with tRNA. H22 functions as the Proton acceptor in the catalytic mechanism. Residues Y68, N70, and N116 each coordinate tRNA.

This sequence belongs to the PTH family. Monomer.

The protein resides in the cytoplasm. It carries out the reaction an N-acyl-L-alpha-aminoacyl-tRNA + H2O = an N-acyl-L-amino acid + a tRNA + H(+). Its function is as follows. Hydrolyzes ribosome-free peptidyl-tRNAs (with 1 or more amino acids incorporated), which drop off the ribosome during protein synthesis, or as a result of ribosome stalling. Catalyzes the release of premature peptidyl moieties from peptidyl-tRNA molecules trapped in stalled 50S ribosomal subunits, and thus maintains levels of free tRNAs and 50S ribosomes. The protein is Peptidyl-tRNA hydrolase of Shewanella oneidensis (strain ATCC 700550 / JCM 31522 / CIP 106686 / LMG 19005 / NCIMB 14063 / MR-1).